The sequence spans 178 residues: Negative modulator of initiation of replication (178 aa).

Residues 113-117 (RTRVY) form an interaction with DNA region.

This sequence belongs to the SeqA family. Homodimer. Polymerizes to form helical filaments.

It localises to the cytoplasm. Functionally, negative regulator of replication initiation, which contributes to regulation of DNA replication and ensures that replication initiation occurs exactly once per chromosome per cell cycle. Binds to pairs of hemimethylated GATC sequences in the oriC region, thus preventing assembly of replication proteins and re-initiation at newly replicated origins. Repression is relieved when the region becomes fully methylated. The sequence is that of Negative modulator of initiation of replication from Photobacterium profundum (strain SS9).